The primary structure comprises 533 residues: Multicopper oxidase CueO (533 aa).

A signal peptide (tat-type signal) is located at residues 1 to 28 (MHRRDFLKLTAALGAATSLPLWSRAALA). 3 consecutive Plastocyanin-like domains span residues 53-166 (QTGS…IDDS), 221-290 (PYPQ…DTRD), and 416-532 (AFNF…FTVS). Cu cation is bound by residues His-102, His-104, His-142, and His-144. Cu cation is bound by residues His-458, His-461, His-463, His-514, Cys-515, His-516, and His-520.

This sequence belongs to the multicopper oxidase family. In terms of assembly, monomer. It depends on Cu cation as a cofactor. Predicted to be exported by the Tat system. The position of the signal peptide cleavage has not been experimentally proven.

The protein localises to the periplasm. It catalyses the reaction 4 Cu(+) + O2 + 4 H(+) = 4 Cu(2+) + 2 H2O. Multicopper oxidase involved in copper homeostasis and copper tolerance under aerobic conditions. Is responsible for the oxidation of Cu(+) to the less harmful Cu(2+) in the periplasm, thereby preventing Cu(+) from entering the cytoplasm. The sequence is that of Multicopper oxidase CueO (cueO) from Yersinia pestis.